Reading from the N-terminus, the 89-residue chain is Protein S100-A8 (89 aa).

2 consecutive EF-hand domains span residues 12–47 (LIDVYHKYSLKKGNYHAVYRDDLKQLLETECPKFMK) and 46–81 (MKKKDADTWFKELDINQDGGINFEEFLVLVIKVGLE). Residues H17 and H27 each contribute to the Zn(2+) site. D33 contacts Ca(2+). Position 42 is an S-nitrosocysteine (C42). The Ca(2+) site is built by D59, N61, D63, and E70. Zn(2+) is bound at residue H83.

The protein belongs to the S-100 family. In terms of assembly, homodimer. Preferentially exists as a heterodimer or heterotetramer with S100A9 known as calprotectin (S100A8/A9). S100A8 interacts with AGER, ATP2A2 and with the heterodimeric complex formed by TLR4 and LY96. Calprotectin (S100A8/9) interacts with CEACAM3 and tubulin filaments in a calcium-dependent manner. Heterotetrameric calprotectin (S100A8/A9) interacts with ANXA6 and associates with tubulin filaments in activated monocytes. S100A8 and calprotectin (S100A8/9) interact with NCF2/P67PHOX, RAC1 and RAC2. Calprotectin (S100A8/9) interacts with CYBA and CYBB. Calprotectin (S100A8/9) interacts with NOS2 to form the iNOS-S100A8/A9 transnitrosylase complex. Calprotectin (S100A8/9) interacts with CD69. As to expression, found essentially in phagocytic cells.

It is found in the secreted. It localises to the cytoplasm. Its subcellular location is the cytoskeleton. The protein resides in the cell membrane. Its function is as follows. S100A8 is a calcium- and zinc-binding protein which plays a prominent role in the regulation of inflammatory processes and immune response. It can induce neutrophil chemotaxis and adhesion. Predominantly found as calprotectin (S100A8/A9) which has a wide plethora of intra- and extracellular functions. The intracellular functions include: facilitating leukocyte arachidonic acid trafficking and metabolism, modulation of the tubulin-dependent cytoskeleton during migration of phagocytes and activation of the neutrophilic NADPH-oxidase. Also participates in regulatory T-cell differentiation together with CD69. Activates NADPH-oxidase by facilitating the enzyme complex assembly at the cell membrane, transferring arachidonic acid, an essential cofactor, to the enzyme complex and S100A8 contributes to the enzyme assembly by directly binding to NCF2/P67PHOX. The extracellular functions involve pro-inflammatory, antimicrobial, oxidant-scavenging and apoptosis-inducing activities. Its pro-inflammatory activity includes recruitment of leukocytes, promotion of cytokine and chemokine production, and regulation of leukocyte adhesion and migration. Acts as an alarmin or a danger associated molecular pattern (DAMP) molecule and stimulates innate immune cells via binding to pattern recognition receptors such as Toll-like receptor 4 (TLR4) and receptor for advanced glycation endproducts (AGER). Binding to TLR4 and AGER activates the MAP-kinase and NF-kappa-B signaling pathways resulting in the amplification of the pro-inflammatory cascade. Has antimicrobial activity towards bacteria and fungi and exerts its antimicrobial activity probably via chelation of Zn(2+) which is essential for microbial growth. Can induce cell death via autophagy and apoptosis and this occurs through the cross-talk of mitochondria and lysosomes via reactive oxygen species (ROS) and the process involves BNIP3. Can regulate neutrophil number and apoptosis by an anti-apoptotic effect; regulates cell survival via ITGAM/ITGB and TLR4 and a signaling mechanism involving MEK-ERK. Its role as an oxidant scavenger has a protective role in preventing exaggerated tissue damage by scavenging oxidants. The iNOS-S100A8/A9 transnitrosylase complex is proposed to direct selective inflammatory stimulus-dependent S-nitrosylation of multiple targets such as GAPDH, ANXA5, EZR, MSN and VIM by recognizing a [IL]-x-C-x-x-[DE] motif; S100A8 seems to contribute to S-nitrosylation site selectivity. This Bos taurus (Bovine) protein is Protein S100-A8 (S100A8).